The chain runs to 229 residues: Potassium/proton antiporter CemA (229 aa).

A run of 4 helical transmembrane segments spans residues Leu-7–Phe-27, Ile-114–Leu-134, Ile-154–Ile-174, and Ile-189–Ile-209.

Belongs to the CemA family.

The protein localises to the plastid. The protein resides in the chloroplast inner membrane. The enzyme catalyses K(+)(in) + H(+)(out) = K(+)(out) + H(+)(in). Contributes to K(+)/H(+) antiport activity by supporting proton efflux to control proton extrusion and homeostasis in chloroplasts in a light-dependent manner to modulate photosynthesis. Prevents excessive induction of non-photochemical quenching (NPQ) under continuous-light conditions. Indirectly promotes efficient inorganic carbon uptake into chloroplasts. This chain is Potassium/proton antiporter CemA, found in Fagus sylvatica (Beechnut).